Consider the following 287-residue polypeptide: Nucleotide-binding protein Dtpsy_0831 (287 aa).

An ATP-binding site is contributed by 10-17 (GMSGSGKS). 59 to 62 (DVRS) is a binding site for GTP.

It belongs to the RapZ-like family.

In terms of biological role, displays ATPase and GTPase activities. This chain is Nucleotide-binding protein Dtpsy_0831, found in Acidovorax ebreus (strain TPSY) (Diaphorobacter sp. (strain TPSY)).